Reading from the N-terminus, the 858-residue chain is Heat shock protein 105 kDa (858 aa).

At serine 2 the chain carries N-acetylserine. N6-acetyllysine is present on lysine 471. Disordered stretches follow at residues 500-585 (KVPT…PPEA) and 801-858 (VNQP…MDLD). A compositionally biased stretch (acidic residues) spans 504–515 (EEDDGSSVEADM). Serine 509 and serine 510 each carry phosphoserine. A compositionally biased stretch (polar residues) spans 533 to 549 (QQDNSEAGTQPQVQTDG). Serine 558 is modified (phosphoserine). Basic and acidic residues-rich tracts occupy residues 564 to 585 (EENK…PPEA) and 806 to 815 (PKIESPKLER). Serine 810 bears the Phosphoserine mark. Threonine 816 carries the phosphothreonine modification. Positions 822 to 834 (LDKKEDLEGKDNF) are enriched in basic and acidic residues.

This sequence belongs to the heat shock protein 70 family. Interacts with HSPA8/HSC70. Interacts with HSPA1A (via NBD) and HSPA1B (via NBD). Phosphorylation on Ser-509 may be important for regulation of the HSPA8/HSC70 chaperone activity. As to expression, predominantly expressed in the brain and also found in the liver.

The protein localises to the cytoplasm. Acts as a nucleotide-exchange factor (NEF) for chaperone proteins HSPA1A and HSPA1B, promoting the release of ADP from HSPA1A/B thereby triggering substrate release. Prevents the aggregation of denatured proteins in cells under severe stress, on which the ATP levels decrease markedly. Inhibits HSPA8/HSC70 ATPase and chaperone activities. This is Heat shock protein 105 kDa (HSPH1) from Cricetulus griseus (Chinese hamster).